We begin with the raw amino-acid sequence, 703 residues long: Polyribonucleotide nucleotidyltransferase (703 aa).

2 residues coordinate Mg(2+): D486 and D492. Residues 553–612 form the KH domain; that stretch reads PKIEIIHINPDKIRDVIGPGGKKINEIIDATGVKLDIEQDGTVFIGSSDASMIEAAKKLI. The S1 motif domain occupies 622–690; that stretch reads GQIYMATVKR…KQGRVNASRK (69 aa).

The protein belongs to the polyribonucleotide nucleotidyltransferase family. Mg(2+) serves as cofactor.

The protein resides in the cytoplasm. It catalyses the reaction RNA(n+1) + phosphate = RNA(n) + a ribonucleoside 5'-diphosphate. Its function is as follows. Involved in mRNA degradation. Catalyzes the phosphorolysis of single-stranded polyribonucleotides processively in the 3'- to 5'-direction. The polypeptide is Polyribonucleotide nucleotidyltransferase (Macrococcus caseolyticus (strain JCSC5402) (Macrococcoides caseolyticum)).